The sequence spans 472 residues: 23S rRNA (uracil(1939)-C(5))-methyltransferase RlmD (472 aa).

Residues 1–15 (MSRTAPHRRAPKRYK) are compositionally biased toward basic residues. The tract at residues 1-23 (MSRTAPHRRAPKRYKTPPPAPAH) is disordered. One can recognise a TRAM domain in the interval 23–87 (HVVTGNEPVI…PKFEQAEVVQ (65 aa)). Residues Cys100, Cys106, Cys109, and Cys188 each contribute to the [4Fe-4S] cluster site. The S-adenosyl-L-methionine site is built by Gln296, Phe325, Asn330, Glu346, Asn374, and Asp395. Cys428 (nucleophile) is an active-site residue.

The protein belongs to the class I-like SAM-binding methyltransferase superfamily. RNA M5U methyltransferase family. RlmD subfamily.

The enzyme catalyses uridine(1939) in 23S rRNA + S-adenosyl-L-methionine = 5-methyluridine(1939) in 23S rRNA + S-adenosyl-L-homocysteine + H(+). Catalyzes the formation of 5-methyl-uridine at position 1939 (m5U1939) in 23S rRNA. The sequence is that of 23S rRNA (uracil(1939)-C(5))-methyltransferase RlmD from Paraburkholderia xenovorans (strain LB400).